A 239-amino-acid chain; its full sequence is MQYFDLMKKACDSVGMEFNEDKYQKFMLYKDLLKEWNEKINLTAITEDEEIVKKHFIDCIKAFKADEFKKAKTVIDVGTGAGFPGLPIAIMREDVEVTLLDSLNKRINFLNEVVNKLALKNVETIHSRAEDGARKKELRENFDIATSRAVANMCVLSEFCIPYVKVNGNFIALKGPNITEELNDSKNAIGTLGGKLKGITEVEIEGTDLNHNLVIVDKIKSTPKTFPRKAGNVTKKPLK.

S-adenosyl-L-methionine contacts are provided by residues G78, F83, 129–130, and R148; that span reads AE.

It belongs to the methyltransferase superfamily. RNA methyltransferase RsmG family.

It localises to the cytoplasm. Functionally, specifically methylates the N7 position of a guanine in 16S rRNA. The protein is Ribosomal RNA small subunit methyltransferase G of Clostridium perfringens (strain SM101 / Type A).